Reading from the N-terminus, the 312-residue chain is Malate dehydrogenase (312 aa).

Residues 7-13 (GAAGGIG) and Asp-34 contribute to the NAD(+) site. Residues Arg-81 and Arg-87 each coordinate substrate. NAD(+) is bound by residues Asn-94 and 117–119 (ITN). Substrate is bound by residues Asn-119 and Arg-153. The Proton acceptor role is filled by His-177. An NAD(+)-binding site is contributed by Met-227.

It belongs to the LDH/MDH superfamily. MDH type 1 family. Homodimer.

The enzyme catalyses (S)-malate + NAD(+) = oxaloacetate + NADH + H(+). In terms of biological role, catalyzes the reversible oxidation of malate to oxaloacetate. This Salmonella choleraesuis (strain SC-B67) protein is Malate dehydrogenase.